The sequence spans 119 residues: NADH-ubiquinone oxidoreductase chain 3 (119 aa).

Transmembrane regions (helical) follow at residues isoleucine 8–leucine 28, leucine 63–valine 83, and isoleucine 88–leucine 108.

The protein belongs to the complex I subunit 3 family.

Its subcellular location is the mitochondrion membrane. It carries out the reaction a ubiquinone + NADH + 5 H(+)(in) = a ubiquinol + NAD(+) + 4 H(+)(out). In terms of biological role, core subunit of the mitochondrial membrane respiratory chain NADH dehydrogenase (Complex I) that is believed to belong to the minimal assembly required for catalysis. Complex I functions in the transfer of electrons from NADH to the respiratory chain. The immediate electron acceptor for the enzyme is believed to be ubiquinone. This chain is NADH-ubiquinone oxidoreductase chain 3 (ND3), found in Brassica napus (Rape).